The sequence spans 59 residues: Large ribosomal subunit protein bL32 (59 aa).

This sequence belongs to the bacterial ribosomal protein bL32 family.

In Desulfitobacterium hafniense (strain Y51), this protein is Large ribosomal subunit protein bL32.